Here is a 428-residue protein sequence, read N- to C-terminus: MKVQRPKGTVDILPGESGSWEKVESIARNFFKRANYREIRTPSFENYEVFSRSSGETSDVVSKEMYDFNDKGGRHIALRPEGTAGVVRAYVENKLYGPDVVKPFSVYYIDNTFRYERPQAGRQREFHQIGVESFGSDSPLADVETLMMAHDLLAELGVKNYELHINSLGNAQVREAYHDALVNYFTPVKDQLSEDSQRRLSQNPLRILDSKDERDKKFLPNAPKIVDYLDDESRENFKTITDMLEQLGINYVMDDDLVRGLDYYTGIIFEFMVEDKNLWESATTILGGGRYNHLVEEFDGPETPAVGFGIGEERLMLVLKEQNPDLFQEEGIDFFITNIGAGTEFKAVEVARSLREQGFSAQYDVDQKKLKQQFRKADRVHATFVITLGAKELENGVLNIKRLSDGKTIDLSLEDINNMQDVINKLED.

Belongs to the class-II aminoacyl-tRNA synthetase family. In terms of assembly, homodimer.

It is found in the cytoplasm. The catalysed reaction is tRNA(His) + L-histidine + ATP = L-histidyl-tRNA(His) + AMP + diphosphate + H(+). This is Histidine--tRNA ligase from Lactobacillus johnsonii (strain CNCM I-12250 / La1 / NCC 533).